The chain runs to 436 residues: 3-ketoacyl-CoA thiolase (436 aa).

Residue cysteine 99 is the Acyl-thioester intermediate of the active site. Catalysis depends on proton acceptor residues histidine 392 and cysteine 422.

The protein belongs to the thiolase-like superfamily. Thiolase family. In terms of assembly, heterotetramer of two alpha chains (FadJ) and two beta chains (FadI).

It localises to the cytoplasm. It carries out the reaction an acyl-CoA + acetyl-CoA = a 3-oxoacyl-CoA + CoA. It participates in lipid metabolism; fatty acid beta-oxidation. Catalyzes the final step of fatty acid oxidation in which acetyl-CoA is released and the CoA ester of a fatty acid two carbons shorter is formed. This Shewanella pealeana (strain ATCC 700345 / ANG-SQ1) protein is 3-ketoacyl-CoA thiolase.